We begin with the raw amino-acid sequence, 316 residues long: Transaldolase (316 aa).

Residue lysine 132 is the Schiff-base intermediate with substrate of the active site.

The protein belongs to the transaldolase family. Type 1 subfamily.

The protein resides in the cytoplasm. The enzyme catalyses D-sedoheptulose 7-phosphate + D-glyceraldehyde 3-phosphate = D-erythrose 4-phosphate + beta-D-fructose 6-phosphate. It functions in the pathway carbohydrate degradation; pentose phosphate pathway; D-glyceraldehyde 3-phosphate and beta-D-fructose 6-phosphate from D-ribose 5-phosphate and D-xylulose 5-phosphate (non-oxidative stage): step 2/3. Its function is as follows. Transaldolase is important for the balance of metabolites in the pentose-phosphate pathway. This Methylomonas aminofaciens protein is Transaldolase.